We begin with the raw amino-acid sequence, 520 residues long: Probable alginate O-acetylase AlgI (520 aa).

A run of 10 helical transmembrane segments spans residues 7-24 (VFLF…YLSG), 39-61 (FYAW…NYWI), 78-100 (WLIL…NFGV), 115-137 (FVLT…ISYI), 150-172 (NLID…VLRF), 239-261 (LYFD…GFRF), 311-333 (LFLT…IWGA), 353-375 (VLNP…IFRA), 402-424 (ANLT…FFGL), and 483-505 (WLSQ…ASVL). The active site involves histidine 322.

Belongs to the membrane-bound acyltransferase family.

Its subcellular location is the cell inner membrane. It participates in glycan biosynthesis; alginate biosynthesis. Together with AlgJ and AlgF, forms an inner membrane complex which probably interacts with the alginate polymerization-transport complex and adds acetyl groups at the O-2 and O-3 positions of mannuronate residues. Acetylation of alginate is important for the architecture of biofilms and increases resistance to opsonic killing in the host. The polypeptide is Probable alginate O-acetylase AlgI (algI) (Pseudomonas aeruginosa (strain ATCC 15692 / DSM 22644 / CIP 104116 / JCM 14847 / LMG 12228 / 1C / PRS 101 / PAO1)).